The sequence spans 254 residues: 3-dehydroquinate dehydratase (254 aa).

Residues 47–49 (EFR) and Arg-83 each bind 3-dehydroquinate. His-144 (proton donor/acceptor) is an active-site residue. Lys-171 serves as the catalytic Schiff-base intermediate with substrate. Arg-213, Ser-232, and Gln-236 together coordinate 3-dehydroquinate.

The protein belongs to the type-I 3-dehydroquinase family. In terms of assembly, homodimer.

The enzyme catalyses 3-dehydroquinate = 3-dehydroshikimate + H2O. It participates in metabolic intermediate biosynthesis; chorismate biosynthesis; chorismate from D-erythrose 4-phosphate and phosphoenolpyruvate: step 3/7. In terms of biological role, involved in the third step of the chorismate pathway, which leads to the biosynthesis of aromatic amino acids. Catalyzes the cis-dehydration of 3-dehydroquinate (DHQ) and introduces the first double bond of the aromatic ring to yield 3-dehydroshikimate. The sequence is that of 3-dehydroquinate dehydratase from Neisseria meningitidis serogroup B (strain ATCC BAA-335 / MC58).